Reading from the N-terminus, the 87-residue chain is Small ribosomal subunit protein bS21 (87 aa).

The span at 47 to 63 (YEKPSEKRARQKAEAVR) shows a compositional bias: basic and acidic residues. The tract at residues 47–87 (YEKPSEKRARQKAEAVRRARKLARKRAQREGLLPMPKKPGR) is disordered. The span at 64-73 (RARKLARKRA) shows a compositional bias: basic residues.

It belongs to the bacterial ribosomal protein bS21 family.

The protein is Small ribosomal subunit protein bS21 of Caulobacter vibrioides (strain ATCC 19089 / CIP 103742 / CB 15) (Caulobacter crescentus).